The primary structure comprises 471 residues: Monocarboxylate transporter 4 (471 aa).

At 1 to 17 the chain is on the cytoplasmic side; the sequence is MGGAVVDEGPTGIKAPD. Residues 18-38 traverse the membrane as a helical segment; it reads GGWGWAVLFGCFIITGFSYAF. The Extracellular segment spans residues 39 to 61; the sequence is PKAVSVFFKELMHEFGIGYSDTA. A helical transmembrane segment spans residues 62-82; sequence WISSILLAMLYGTGPLCSMCV. Topologically, residues 83-84 are cytoplasmic; the sequence is NR. Residues 85–105 form a helical membrane-spanning segment; it reads FGCRPVMLVGGLFASLGMVAA. Residues 106–109 are Extracellular-facing; that stretch reads SFCR. The chain crosses the membrane as a helical span at residues 110 to 130; that stretch reads SIIQIYLTTGVITGLGLALNF. Over 131 to 149 the chain is Cytoplasmic; that stretch reads QPSLIMLNRYFNKRRPMAN. A helical membrane pass occupies residues 150-170; sequence GLAAAGSPVFLCALSPLGQLL. Residues 171–179 are Extracellular-facing; that stretch reads QDHYGWRGG. The chain crosses the membrane as a helical span at residues 180 to 200; sequence FLILGGLLLNCCVCAALMRPL. The Cytoplasmic segment spans residues 201–231; sequence VAPQASGGAEPHGPQRPSPRLLDLSVFRDRG. A helical transmembrane segment spans residues 232-252; that stretch reads FLIYAVAASIMVLGLFVPPVF. Topologically, residues 253–267 are extracellular; the sequence is VVSYAKDMGVPDTKA. The chain crosses the membrane as a helical span at residues 268–288; sequence AFLLTILGFIDIFARPTAGFI. Residues 289–298 lie on the Cytoplasmic side of the membrane; that stretch reads TGLKKVRPYS. Residues 299 to 319 traverse the membrane as a helical segment; the sequence is VYLFSFAMFFNGFTDLTGSTA. The Extracellular portion of the chain corresponds to 320 to 321; that stretch reads SD. The chain crosses the membrane as a helical span at residues 322 to 342; that stretch reads YGGLVVFCIFFGISYGMVGAL. Over 343-355 the chain is Cytoplasmic; the sequence is QFEVLMAIVGTQK. The helical transmembrane segment at 356–376 threads the bilayer; it reads FSSAIGLVLLLEAVAVLIGPP. Topologically, residues 377 to 391 are extracellular; sequence SGGKLLDATKVYKYV. The helical transmembrane segment at 392 to 412 threads the bilayer; that stretch reads FILAGAEVLTSSLVLLLGNFF. At 413-471 the chain is on the cytoplasmic side; the sequence is CIGKRKRPEVTKPEEVASEEEKLHKPPVDVRVDSREVEHFLKAEPEKNGEVVHTPETSV. Basolateral sorting signal regions lie at residues 429–447 and 447–471; these read ASEE…VDSR and REVE…ETSV. Ser-430 carries the phosphoserine modification. Thr-466 is modified (phosphothreonine). Position 470 is a phosphoserine (Ser-470).

The protein belongs to the major facilitator superfamily. Monocarboxylate porter (TC 2.A.1.13) family. Interacts with BSG; interaction mediates SLC16A3 targeting to the plasma membrane. Detected in testis, small intestine, parotid gland, lung and brain. Small amounts are detected in heart, kidney and spleen. Expressed in skeletal muscle.

It is found in the cell membrane. The protein resides in the basolateral cell membrane. The enzyme catalyses (S)-lactate(in) + H(+)(in) = (S)-lactate(out) + H(+)(out). The catalysed reaction is pyruvate(out) + H(+)(out) = pyruvate(in) + H(+)(in). In terms of biological role, proton-dependent transporter of monocarboxylates such as L-lactate and pyruvate. Plays a predominant role in the L-lactate efflux from highly glycolytic cells. The protein is Monocarboxylate transporter 4 (Slc16a3) of Rattus norvegicus (Rat).